Here is a 351-residue protein sequence, read N- to C-terminus: Glycerol-1-phosphate dehydrogenase [NAD(P)+] (351 aa).

Residues 93 to 97 and 115 to 118 contribute to the NAD(+) site; these read GKVLD and TTAS. Position 120 (Asp120) interacts with substrate. Ser124 contributes to the NAD(+) binding site. Asp167 serves as a coordination point for substrate. Zn(2+) is bound by residues Asp167 and His247. His251 is a binding site for substrate. His263 is a Zn(2+) binding site.

Belongs to the glycerol-1-phosphate dehydrogenase family. The cofactor is Zn(2+).

The protein resides in the cytoplasm. It carries out the reaction sn-glycerol 1-phosphate + NAD(+) = dihydroxyacetone phosphate + NADH + H(+). It catalyses the reaction sn-glycerol 1-phosphate + NADP(+) = dihydroxyacetone phosphate + NADPH + H(+). Its pathway is membrane lipid metabolism; glycerophospholipid metabolism. Its function is as follows. Catalyzes the NAD(P)H-dependent reduction of dihydroxyacetonephosphate (DHAP or glycerone phosphate) to glycerol 1-phosphate (G1P). The G1P thus generated is used as the glycerophosphate backbone of phospholipids in the cellular membranes of Archaea. In Archaeoglobus fulgidus (strain ATCC 49558 / DSM 4304 / JCM 9628 / NBRC 100126 / VC-16), this protein is Glycerol-1-phosphate dehydrogenase [NAD(P)+].